Reading from the N-terminus, the 763-residue chain is MSVVGFDVGNENCVIAVAKQRGIDVLLNDESNRENPAMVSFGEKQRFMGAAAAASATMHPKSTISQLKRLIGRKFREPDVQNDLRLFPFETSEDSDGGIQIRLRYMGEIQSFSPVQILGMLLSHLKQIAEKSLKTPVSDCVIGIPSYFTNSQRLAYLDAAAIAGLRPLRLMHDSTATALGYGIYKTDLVANSSPTYIVFIDIGHCDTQVCVASFESGSMRVRSHAFDRNLGGRDFDEVLFNHFALEFKEKYNIDVYTNTKACVRLRASCEKVKKVLSANAEAQLNIECLMEEKDVRSFIKREEFEQLSAGLLERLIVPCQKALADSGLSLDQIHSVELVGSGSRIPAISKMLSSLFKRELGRTVNASECVARGCALQCAMLSPVFRVRDYEVQDSYPFAIGFSSDKGPINTPSNELLFPKGQIFPSVKVLTLHRENTFQLEAFYANHNELSPDIPTQISSFMIGPFHISHGEAARVKVRVQLNLHGIVTIDSATLIEYHKENITSEEMISEENHQSSAMKDGSLDPSSGSIGNEPKAIKRMEIPVVANVSGALTKDELSEAKQRENSLVEQDLKMESTKDKKNALESFVYEMRDKMLNTYRNTATESERECIARNLQETEEWLYEDGDDESENAYIEKLNDVKKLIDPIENRFKDGEERVQASKDLLKTIADNRMAAESLPPPRKNAVLDECHKAERWLHEKTTEQESLPKDANPELQSAEIRRKADALNATCKYIGKSNSPPAKPEHNGSYGSRKSDDMELD.

Disordered stretches follow at residues 509-529 and 701-763; these read ISEE…PSSG and EKTT…MELD. Residue serine 528 is modified to Phosphoserine. The span at 701 to 714 shows a compositional bias: basic and acidic residues; sequence EKTTEQESLPKDAN.

This sequence belongs to the heat shock protein 70 (TC 1.A.33) family. HSP110/SSE subfamily.

This Arabidopsis thaliana (Mouse-ear cress) protein is Heat shock 70 kDa protein 16 (HSP70-16).